Reading from the N-terminus, the 499-residue chain is Cytosol aminopeptidase (499 aa).

Positions 267 and 272 each coordinate Mn(2+). Lys279 is an active-site residue. Positions 290, 349, and 351 each coordinate Mn(2+). Residue Arg353 is part of the active site.

It belongs to the peptidase M17 family. Requires Mn(2+) as cofactor.

It is found in the cytoplasm. The enzyme catalyses Release of an N-terminal amino acid, Xaa-|-Yaa-, in which Xaa is preferably Leu, but may be other amino acids including Pro although not Arg or Lys, and Yaa may be Pro. Amino acid amides and methyl esters are also readily hydrolyzed, but rates on arylamides are exceedingly low.. It carries out the reaction Release of an N-terminal amino acid, preferentially leucine, but not glutamic or aspartic acids.. In terms of biological role, presumably involved in the processing and regular turnover of intracellular proteins. Catalyzes the removal of unsubstituted N-terminal amino acids from various peptides. This Buchnera aphidicola subsp. Acyrthosiphon pisum (strain APS) (Acyrthosiphon pisum symbiotic bacterium) protein is Cytosol aminopeptidase (pepA).